Here is a 227-residue protein sequence, read N- to C-terminus: Flagellar transcriptional regulator FtcR (227 aa).

Positions 1-116 (MIVVVDDRDM…EILARINAIR (116 aa)) constitute a Response regulatory domain. The segment at residues 127 to 226 (ADGTQLGPIR…KRFLGYCINI (100 aa)) is a DNA-binding region (ompR/PhoB-type).

Its function is as follows. Required for transcription of flagellar genes. The protein is Flagellar transcriptional regulator FtcR (ftcR) of Brucella abortus (strain 2308).